Consider the following 210-residue polypeptide: Protein GET1 (210 aa).

At 1 to 4 (MPSL) the chain is on the lumenal side. Residues 5–24 (LIIVLIIHVVTYLINTIGAN) form a helical membrane-spanning segment. Topologically, residues 25 to 110 (TIDSLLWLLY…SFDLAVKSIR (86 aa)) are cytoplasmic. A coiled-coil region spans residues 39–95 (NQTSQTANEQRRLKREVMQLKREMNATSSQDEFAKWAKLRRRHDKTMEEYEAKNKAL). A helical membrane pass occupies residues 111–131 (FFSTTGLKLFLQFWCSKTPIF). Residues 132–155 (ELPRGWIPWQVEWVLSFPRAPLGT) lie on the Lumenal side of the membrane. The helical transmembrane segment at 156–172 (VSIQIWGGVCATVVSLA) threads the bilayer. At 173–210 (GDAIGVVNVYLTSKAPKQKEPATSGENSARPMAIKKEL) the chain is on the cytoplasmic side. The tract at residues 189 to 210 (KQKEPATSGENSARPMAIKKEL) is disordered.

It belongs to the WRB/GET1 family. As to quaternary structure, interacts with GET3.

The protein resides in the endoplasmic reticulum membrane. In terms of biological role, required for the post-translational delivery of tail-anchored (TA) proteins to the endoplasmic reticulum. Acts as a membrane receptor for soluble GET3, which recognizes and selectively binds the transmembrane domain of TA proteins in the cytosol. The sequence is that of Protein GET1 from Coccidioides immitis (strain RS) (Valley fever fungus).